Reading from the N-terminus, the 226-residue chain is Biosynthetic peptidoglycan transglycosylase (226 aa).

A helical transmembrane segment spans residues 10–30 (IIMTLLALLILPYLLIPVYAL).

Belongs to the glycosyltransferase 51 family.

The protein localises to the cell inner membrane. The catalysed reaction is [GlcNAc-(1-&gt;4)-Mur2Ac(oyl-L-Ala-gamma-D-Glu-L-Lys-D-Ala-D-Ala)](n)-di-trans,octa-cis-undecaprenyl diphosphate + beta-D-GlcNAc-(1-&gt;4)-Mur2Ac(oyl-L-Ala-gamma-D-Glu-L-Lys-D-Ala-D-Ala)-di-trans,octa-cis-undecaprenyl diphosphate = [GlcNAc-(1-&gt;4)-Mur2Ac(oyl-L-Ala-gamma-D-Glu-L-Lys-D-Ala-D-Ala)](n+1)-di-trans,octa-cis-undecaprenyl diphosphate + di-trans,octa-cis-undecaprenyl diphosphate + H(+). Its pathway is cell wall biogenesis; peptidoglycan biosynthesis. Functionally, peptidoglycan polymerase that catalyzes glycan chain elongation from lipid-linked precursors. This is Biosynthetic peptidoglycan transglycosylase from Agrobacterium fabrum (strain C58 / ATCC 33970) (Agrobacterium tumefaciens (strain C58)).